The chain runs to 179 residues: CASP-like protein 5A2 (179 aa).

A disordered region spans residues 1-24 (MNVSHASVHPVEDPPAAATEVENP). The Cytoplasmic segment spans residues 1–38 (MNVSHASVHPVEDPPAAATEVENPPRVRMDDMEGMPGT). A helical membrane pass occupies residues 39 to 59 (LLGLALRFFQFLFAAAALCVM). At 60–70 (ASTSDFPSVTA) the chain is on the extracellular side. A helical transmembrane segment spans residues 71-91 (FCYLVAATGLQSLWSLALAMV). Residues 92-115 (DVYAIMVKRSLQNRRLVSLFAIGD) are Cytoplasmic-facing. The chain crosses the membrane as a helical span at residues 116–136 (GVTSTLTFAAACASAGITVLI). The Extracellular portion of the chain corresponds to 137-155 (DNDLNSCAQNHCVQFETST). A helical transmembrane segment spans residues 156 to 176 (ALAFISWFAALPSFLFNFWSL). Topologically, residues 177–179 (ASR) are cytoplasmic.

It belongs to the Casparian strip membrane proteins (CASP) family. In terms of assembly, homodimer and heterodimers.

It localises to the cell membrane. This Arabidopsis thaliana (Mouse-ear cress) protein is CASP-like protein 5A2.